A 133-amino-acid chain; its full sequence is DNA-directed RNA polymerases I and III subunit RPAC2 (133 aa).

Met1 bears the N-acetylmethionine mark.

It belongs to the archaeal Rpo11/eukaryotic RPB11/RPC19 RNA polymerase subunit family. As to quaternary structure, component of the RNA polymerase I and RNA polymerase III complexes consisting of at least 13 and 17 subunits, respectively. Pol I complex consists of a ten-subunit catalytic core composed of POLR1A/RPA1, POLR1B/RPA2, POLR1C/RPAC1, POLR1D/RPAC2, POLR1H/RPA12, POLR2E/RPABC1, POLR2F/RPABC2, POLR2H/RPABC3, POLR2K/RPABC4 and POLR2L/RPABC5; a mobile stalk subunit POLR1F/RPA43 protruding from the core and additional subunits homologous to general transcription factors POLR1E/RPA49 and POLR1G/RPA34. Part of Pol I pre-initiation complex (PIC), in which Pol I core assembles with RRN3 and promoter-bound UTBF and SL1/TIF-IB complex. Pol III complex consists of a ten-subunit catalytic core composed of POLR3A/RPC1, POLR3B/RPC2, POLR1C/RPAC1, POLR1D/RPAC2, POLR3K/RPC10, POLR2E/RPABC1, POLR2F/RPABC2, POLR2H/RPABC3, POLR2K/RPABC4 and POLR2L/RPABC5; a mobile stalk composed of two subunits POLR3H/RPC8 and CRCP/RPC9, protruding from the core and functioning primarily in transcription initiation; and additional subunits homologous to general transcription factors of the RNA polymerase II machinery, POLR3C/RPC3-POLR3F/RPC6-POLR3G/RPC7 heterotrimer required for transcription initiation and POLR3D/RPC4-POLR3E/RPC5 heterodimer involved in both transcription initiation and termination.

The protein resides in the nucleus. It is found in the nucleolus. Functionally, DNA-dependent RNA polymerase catalyzes the transcription of DNA into RNA using the four ribonucleoside triphosphates as substrates. Common component of RNA polymerases I and III which synthesize ribosomal RNA precursors and short non-coding RNAs including 5S rRNA, snRNAs, tRNAs and miRNAs, respectively. The polypeptide is DNA-directed RNA polymerases I and III subunit RPAC2 (Homo sapiens (Human)).